A 1019-amino-acid chain; its full sequence is Enteropeptidase (1019 aa).

A lipid anchor (N-myristoyl glycine) is attached at Gly2. Topologically, residues 2-18 (GSKRGISSRHHSLSSYE) are cytoplasmic. A helical; Signal-anchor for type II membrane protein transmembrane segment spans residues 19–47 (IMFAALFAILVVLCAGLIAVSCLTIKESQ). The Extracellular portion of the chain corresponds to 48–1019 (RGAALGQSHE…FTEWIQSFLH (972 aa)). The SEA domain maps to 54-169 (QSHEARATFK…NSVDILDKLT (116 aa)). 3 N-linked (GlcNAc...) asparagine glycosylation sites follow: Asn116, Asn147, and Asn179. In terms of domain architecture, LDL-receptor class A 1 spans 182–223 (IECLPGSSPCTDALTCIKADLFCDGEVNCPDGSDEDNKMCAT). Cystine bridges form between Cys184–Cys197, Cys191–Cys210, Cys204–Cys221, and Cys225–Cys253. The region spanning 225-334 (CDGRFLLTGS…VGFNATYTAF (110 aa)) is the CUB 1 domain. Asn328, Asn335, Asn388, Asn440, Asn470, Asn503, Asn534, and Asn630 each carry an N-linked (GlcNAc...) asparagine glycan. Residues 342–504 (YEKINCNFED…ISLTYGICNG (163 aa)) form the MAM domain. Cysteines 524 and 552 form a disulfide. The CUB 2 domain occupies 524-634 (CGGPFELWEP…GGFKANFTTG (111 aa)). The LDL-receptor class A 2 domain occupies 641–679 (EPCKADHFQCKNGECVPLVNLCDGHLHCEDGSDEADCVR). Cystine bridges form between Cys643-Cys655, Cys650-Cys668, and Cys662-Cys677. The region spanning 678–771 (VRFFNGTTNN…LIRLQCNHKS (94 aa)) is the SRCR domain. 3 N-linked (GlcNAc...) asparagine glycosylation sites follow: Asn682, Asn706, and Asn725. 3 cysteine pairs are disulfide-bonded: Cys757-Cys767, Cys772-Cys896, and Cys810-Cys826. Positions 785 to 1019 (IVGGSNAKEG…FTEWIQSFLH (235 aa)) constitute a Peptidase S1 domain. His825 (charge relay system) is an active-site residue. N-linked (GlcNAc...) asparagine glycosylation occurs at Asn848. Asp876 functions as the Charge relay system in the catalytic mechanism. Asn887, Asn909, and Asn949 each carry an N-linked (GlcNAc...) asparagine glycan. Cystine bridges form between Cys910–Cys977, Cys941–Cys956, and Cys967–Cys995. Residue Ser971 is the Charge relay system of the active site.

This sequence belongs to the peptidase S1 family. As to quaternary structure, heterodimer of a catalytic (light) chain and a multidomain (heavy) chain linked by a disulfide bond. In terms of processing, the chains are derived from a single precursor that is cleaved by a trypsin-like protease. In terms of tissue distribution, intestinal brush border.

The protein localises to the membrane. It catalyses the reaction Activation of trypsinogen by selective cleavage of 6-Lys-|-Ile-7 bond.. Its function is as follows. Responsible for initiating activation of pancreatic proteolytic proenzymes (trypsin, chymotrypsin and carboxypeptidase A). It catalyzes the conversion of trypsinogen to trypsin which in turn activates other proenzymes including chymotrypsinogen, procarboxypeptidases, and proelastases. The chain is Enteropeptidase (TMPRSS15) from Homo sapiens (Human).